The chain runs to 282 residues: Bifunctional protein FolD (282 aa).

Residues 162 to 164 (GRS), S187, and V228 contribute to the NADP(+) site.

This sequence belongs to the tetrahydrofolate dehydrogenase/cyclohydrolase family. In terms of assembly, homodimer.

The enzyme catalyses (6R)-5,10-methylene-5,6,7,8-tetrahydrofolate + NADP(+) = (6R)-5,10-methenyltetrahydrofolate + NADPH. It catalyses the reaction (6R)-5,10-methenyltetrahydrofolate + H2O = (6R)-10-formyltetrahydrofolate + H(+). Its pathway is one-carbon metabolism; tetrahydrofolate interconversion. Its function is as follows. Catalyzes the oxidation of 5,10-methylenetetrahydrofolate to 5,10-methenyltetrahydrofolate and then the hydrolysis of 5,10-methenyltetrahydrofolate to 10-formyltetrahydrofolate. This chain is Bifunctional protein FolD, found in Thermus thermophilus (strain ATCC 27634 / DSM 579 / HB8).